A 418-amino-acid polypeptide reads, in one-letter code: MDIGDFVKLKLENTTYSGTVMPSLNEDTIVIKMKSGYNVGIDKNKIKNIEILESGDKPKYGLPPLNLEKNPKLKNISILSTGGTVASRVDYKTGAVHPAFTADDLIMAVPELLDIANIKGKVILNILSENMLPKYWVMTAEAIKEEIENGAEGIVIAHGTDTMHYTASALSFMVNSEVPIILVGAQRSSDRPSSDAALNIISAVKAATEPIKGVYVLMHGETGDTVCHLHEGTKVRKLHSSRRDAFKSVNKTPFAEINPFTKEVKYLRDVKNQDKSKIKEIVLNTNLEEKVALIKVYPGIDSEILKFYVDKGYKGIILEGTGLGHTPETFFEGIDYANENNVLVAMTTQTINGRVNMNVYSNGRELQAKGVIPCEDMLSEVAFVKLMYLLGNYEIEDAKELMSKDIAGEINESINLEC.

The 332-residue stretch at 74 to 405 (KNISILSTGG…EDAKELMSKD (332 aa)) folds into the Asparaginase/glutaminase domain. Catalysis depends on residues Thr84, Thr160, Asp161, and Lys237.

Belongs to the asparaginase 1 family. GatD subfamily. As to quaternary structure, heterodimer of GatD and GatE.

The enzyme catalyses L-glutamyl-tRNA(Gln) + L-glutamine + ATP + H2O = L-glutaminyl-tRNA(Gln) + L-glutamate + ADP + phosphate + H(+). Allows the formation of correctly charged Gln-tRNA(Gln) through the transamidation of misacylated Glu-tRNA(Gln) in organisms which lack glutaminyl-tRNA synthetase. The reaction takes place in the presence of glutamine and ATP through an activated gamma-phospho-Glu-tRNA(Gln). The GatDE system is specific for glutamate and does not act on aspartate. This chain is Glutamyl-tRNA(Gln) amidotransferase subunit D, found in Methanococcus maripaludis (strain C7 / ATCC BAA-1331).